The chain runs to 361 residues: Tetrathionate reductase subunit C (361 aa).

9 consecutive transmembrane segments (helical) span residues 26-46 (FSYALLISGADLLLLAALALL), 53-73 (AIPMFLILGLSFFSVILLGPL), 104-124 (ALYGGLLWPLTFIVALIFALL), 160-180 (LAAILVPLSALWTIYPGMLFF), 193-213 (LMLPMFFGETFITATGTALIL), 233-253 (GAAAIALAGVLILQMFIWGMW), 258-278 (FAAVVPMMQAAAVIFLLTFIL), 288-308 (ITPIVPVLALFGVVVNKWNLI), and 334-354 (AVSPIALAILLLVILSYIFPM).

The protein belongs to the NrfD family. In terms of assembly, probably composed of three subunits: TtrA, TtrB and TtrC.

It is found in the cell membrane. Its function is as follows. Part of a membrane-bound tetrathionate reductase that catalyzes the reduction of tetrathionate to thiosulfate. TtrC probably anchors TtrA and TtrB to the external face of the cytoplasmic membrane. May transfer electrons from membrane quinol to TtrB. This chain is Tetrathionate reductase subunit C (ttrC), found in Archaeoglobus fulgidus (strain ATCC 49558 / DSM 4304 / JCM 9628 / NBRC 100126 / VC-16).